The chain runs to 602 residues: Elongation factor 4 (602 aa).

Residues 7-189 (RNIRNFSIIA…AIVQRIPAPQ (183 aa)) form the tr-type G domain. GTP-binding positions include 19–24 (DHGKST) and 136–139 (NKID).

Belongs to the TRAFAC class translation factor GTPase superfamily. Classic translation factor GTPase family. LepA subfamily.

Its subcellular location is the cell inner membrane. The catalysed reaction is GTP + H2O = GDP + phosphate + H(+). Required for accurate and efficient protein synthesis under certain stress conditions. May act as a fidelity factor of the translation reaction, by catalyzing a one-codon backward translocation of tRNAs on improperly translocated ribosomes. Back-translocation proceeds from a post-translocation (POST) complex to a pre-translocation (PRE) complex, thus giving elongation factor G a second chance to translocate the tRNAs correctly. Binds to ribosomes in a GTP-dependent manner. The chain is Elongation factor 4 from Xylella fastidiosa (strain 9a5c).